A 996-amino-acid polypeptide reads, in one-letter code: Cilia- and flagella-associated protein 251 (996 aa).

WD repeat units follow at residues 73–114, 118–164, 168–211, 219–258, 282–319, 399–438, 445–485, 494–533, 547–593, 615–658, and 719–759; these read GHCN…PKKT, PHPN…EPCL, EFDR…KGFN, PSLK…EKVD, KGSN…IAWF, SIVS…SVLS, TDKE…WQNS, QGKP…FDVN, IHHS…YSKQ, EQET…FKFC, and AHPD…LEQI. Positions 971–996 are disordered; it reads DLEGEERDDNIEDQYEDEENEEYDQD.

The protein resides in the cell projection. It is found in the cilium. In terms of biological role, as component of a spoke-associated complex, regulates ciliary mobility by mediating a stable and functional assembly of the radial spoke 3 (RS3). This Tetrahymena thermophila (strain SB210) protein is Cilia- and flagella-associated protein 251.